Consider the following 411-residue polypeptide: Mannan endo-1,4-beta-mannosidase 1 (411 aa).

The first 17 residues, 1 to 17, serve as a signal peptide directing secretion; the sequence is MLNILPFFLFFLPFLIG. The N-linked (GlcNAc...) asparagine glycan is linked to N33. Residues W87 and N197 each coordinate substrate. The active-site Proton donor is the E198. N202 is a glycosylation site (N-linked (GlcNAc...) asparagine). Y277 contacts substrate. E319 serves as the catalytic Nucleophile. W361 contributes to the substrate binding site. N366 and N384 each carry an N-linked (GlcNAc...) asparagine glycan.

The protein belongs to the glycosyl hydrolase 5 (cellulase A) family. In terms of tissue distribution, expressed in roots, stems and flowers.

Its subcellular location is the secreted. The catalysed reaction is Random hydrolysis of (1-&gt;4)-beta-D-mannosidic linkages in mannans, galactomannans and glucomannans.. The sequence is that of Mannan endo-1,4-beta-mannosidase 1 (MAN1) from Arabidopsis thaliana (Mouse-ear cress).